Reading from the N-terminus, the 227-residue chain is Zinc finger protein 511 (227 aa).

3 consecutive C2H2-type zinc fingers follow at residues 80 to 105 (FTCQVAGCCQVFAAIEDYQHHYHMMH), 107 to 130 (NTCSFCNRAFPSGHLLDVHILEWH), and 144 to 169 (YQCLVESCPEKFKTSQDRKDHMVRLH). The segment at 180–204 (PKTNRGPAMPAAADAATRAPTDDSD) is disordered. A compositionally biased stretch (low complexity) spans 186–198 (PAMPAAADAATRA).

The protein belongs to the krueppel C2H2-type zinc-finger protein family.

It is found in the nucleus. Its function is as follows. May be involved in transcriptional regulation. This Mus musculus (Mouse) protein is Zinc finger protein 511 (Znf511).